A 761-amino-acid polypeptide reads, in one-letter code: MTNTVLEWMVEDAQRLAECRHDHPFAVLGPQPQEDGTWVLRAWMPEAEGVTLLLGDQEMGMSTPHHPWIFEASVAHDPGCAYRLRVHRGGITHEQHDPWAFRQDWMGEMDRHLFAEGNHHHIWRRMGAHHCEREGIPGVMFCLWAPHARSVSVIGDLNSWDGRHHPMQQRLGGIWELFVPGLAEGQLYKYEIRTQEGHCYQKADPYGFQHEVRPDTSSVVSHLDGFHWTDTDWIQKRDSSNPLDQPIAVYEMHLGSWIHAAADEPFIEADGTPRAPVPAADLKPGARLLTYPELADRLIPYVKERGFTHIELMPITEHPFDGSWGYQVTGWYAPTSRYGTPDEFRAFVDRCHAEGIGVIIDWVPGHFPRDSHGLAFFDGCHLYEHADPRIGEHKEWGTLIFNYSRNEVRNFLVANLVFWFDQFHIDGIRVDAVASMLYRDYLRPDGEWLPNEHGGRENTEAVQFLQQANHVLFQHFPGALSIAEESTTWPMVTQPTDIGGLGFNLKWNMGWMHDMLDYFELDPWFRQFHQNNITFSIWYTYTENFMLALSHDEVVHGKSNLLHKMPGDDWQKYANTRALLAYMWTHPGKKTIFMGMEFGQRAEWNVWGDLQWDLLNYEPHQGVQRMVDDLNGLYKSEPALWRDDFDQYGFQWIDCNDNRHSVISFMRRESTSGTWLVVVANFTPQSHSHYRVGVPLAGYYEEIFNTDASKYGGSNLGNMGGKPTEEWGIHGYENSLDLCLPPLSLMVFKHDPKKSLNPVQE.

Residue D431 is the Nucleophile of the active site. Catalysis depends on E484, which acts as the Proton donor.

Belongs to the glycosyl hydrolase 13 family. GlgB subfamily. Monomer.

The catalysed reaction is Transfers a segment of a (1-&gt;4)-alpha-D-glucan chain to a primary hydroxy group in a similar glucan chain.. The protein operates within glycan biosynthesis; glycogen biosynthesis. Its function is as follows. Catalyzes the formation of the alpha-1,6-glucosidic linkages in glycogen by scission of a 1,4-alpha-linked oligosaccharide from growing alpha-1,4-glucan chains and the subsequent attachment of the oligosaccharide to the alpha-1,6 position. In Synechococcus sp. (strain WH7803), this protein is 1,4-alpha-glucan branching enzyme GlgB.